Reading from the N-terminus, the 219-residue chain is Leukocyte surface antigen CD53 (219 aa).

The Cytoplasmic portion of the chain corresponds to 1-11 (MGMSSLKLLKF). The helical transmembrane segment at 12-32 (VLFFFNLIFWFCGCCILGLGI) threads the bilayer. Topologically, residues 33–54 (YLLIHSKFGVLFHNLPSLTLGN) are extracellular. Residues 55–69 (VLVIVGSVIMVVAFL) form a helical membrane-spanning segment. Residues 70–80 (GCMGSIKENKC) lie on the Cytoplasmic side of the membrane. A helical membrane pass occupies residues 81–106 (LLMSFFVLLLIILLAEVTLAILLFVY). Residues 107–181 (EQKLKEYVAE…IQAKQWFHSN (75 aa)) lie on the Extracellular side of the membrane. 2 N-linked (GlcNAc...) asparagine glycosylation sites follow: Asn-129 and Asn-148. The chain crosses the membrane as a helical span at residues 182–206 (FLYIGITTICVCVIQVLGMSFALTL). Over 207 to 219 (NCQIDKTSQVLGL) the chain is Cytoplasmic.

It belongs to the tetraspanin (TM4SF) family. In terms of assembly, interacts with SCIMP. Interacts with CD45/PTPRC. Interacts with IL7R. Interacts with RBL2 and PPP2CA.

It localises to the cell membrane. Its subcellular location is the cell junction. The protein resides in the membrane. It is found in the synapse. In terms of biological role, structural component of specialized membrane microdomains known as tetraspanin-enriched microdomains (TERMs), which act as platforms for receptor clustering and signaling. Participates thereby in diverse biological functions such as cell signal transduction, adhesion, migration and protein trafficking. Plays a role in the activation of monocytes and B-cells. Acts as an essential regulator of B-cell development by promoting interleukin-7 receptor/IL7R signaling. Also promotes, in B-cells, the BCR signaling by recruiting PKC to the plasma membrane in order to phosphorylate its substrates. Plays an essential role in B- and T-cells homing to lymph nodes by stabilizing L-selectin/SELL cell surface expression. Also mediates metabolic and inflammatory functions in hepatocytes and adipose tissue by promoting TNF-alpha and LPS signaling independent of the immune compartment. This is Leukocyte surface antigen CD53 (CD53) from Bos taurus (Bovine).